Here is a 440-residue protein sequence, read N- to C-terminus: Xylose isomerase (440 aa).

Residues His101 and Asp104 contribute to the active site. The Mg(2+) site is built by Glu232, Glu268, His271, Asp296, Asp307, Asp309, and Asp339.

This sequence belongs to the xylose isomerase family. In terms of assembly, homotetramer. Mg(2+) is required as a cofactor.

The protein resides in the cytoplasm. It carries out the reaction alpha-D-xylose = alpha-D-xylulofuranose. The polypeptide is Xylose isomerase (Enterobacter sp. (strain 638)).